Reading from the N-terminus, the 646-residue chain is Autophagy-related protein 28 (646 aa).

Disordered stretches follow at residues 1–148 and 221–245; these read MSSP…HVDN and PTRS…RGLK. Polar residues predominate over residues 12–21; it reads SPRQRLSNPL. Over residues 63-75 the composition is skewed to low complexity; sequence SATSTRRSSSPAS. Residues 106 to 122 show a composition bias toward polar residues; the sequence is MMMNQHPSRQSTVSSHG. Coiled-coil stretches lie at residues 283–350 and 485–514; these read LDKM…MEDV and QQAA…ESKH. Disordered regions lie at residues 475–494 and 546–612; these read SQAG…SQLS and AAAV…RGSA. Basic and acidic residues-rich tracts occupy residues 557–575 and 588–597; these read STDK…SHDE and RMEDHDHDPP.

It belongs to the ATG28 family.

It is found in the cytoplasm. The protein resides in the vacuole membrane. Its subcellular location is the cytoplasmic vesicle membrane. Its function is as follows. Required for the autophagic degradation of peroxisomes called pexophagy, but not essential for general autophagy. Involved in resistance to elevated pH. The polypeptide is Autophagy-related protein 28 (Gibberella zeae (strain ATCC MYA-4620 / CBS 123657 / FGSC 9075 / NRRL 31084 / PH-1) (Wheat head blight fungus)).